The following is a 437-amino-acid chain: O-methyltransferase 3 (437 aa).

The segment at 1-21 (MNNKTSNGDITNDEPTVGSKR) is disordered. A coiled-coil region spans residues 146 to 180 (SDNLYQDKDDLEKQEKEREKKMANLLSKNVDIKEL). Positions 408–437 (DPINNNNNNNNNNNNNNNNTTTTTSTTTTN) are disordered. Residues 411 to 437 (NNNNNNNNNNNNNNNNTTTTTSTTTTN) show a composition bias toward low complexity.

Belongs to the methyltransferase superfamily. METL family.

Functionally, probable methyltransferase. The polypeptide is O-methyltransferase 3 (omt3) (Dictyostelium discoideum (Social amoeba)).